The chain runs to 194 residues: MYLDQIKAELVEAQDVLNKFISDENNIKLIQEAALLISNSFKQGGKVLSCGNGGSHCDAMHFAEELTGRYRENRPGYPAIAISDASHLSCVSNDFGYEYVFSRYVEAVGQKGDVLFGLSTSGNSKNILNAIEAAKAKGMKVIAMTGKDGGKMAGLADVEIRVPHFRYADRIQEIHIKVIHILMMLIEFEMAKQA.

Residues 37–194 (ISNSFKQGGK…LIEFEMAKQA (158 aa)) enclose the SIS domain. Substrate is bound at residue 52–54 (NGG). Zn(2+) is bound by residues histidine 61 and glutamate 65. Residues glutamate 65, 93-94 (ND), 119-121 (STS), serine 124, and glutamine 172 contribute to the substrate site. Residues glutamine 172 and histidine 180 each coordinate Zn(2+).

It belongs to the SIS family. GmhA subfamily. As to quaternary structure, homotetramer. The cofactor is Zn(2+).

The protein resides in the cytoplasm. It catalyses the reaction 2 D-sedoheptulose 7-phosphate = D-glycero-alpha-D-manno-heptose 7-phosphate + D-glycero-beta-D-manno-heptose 7-phosphate. Its pathway is carbohydrate biosynthesis; D-glycero-D-manno-heptose 7-phosphate biosynthesis; D-glycero-alpha-D-manno-heptose 7-phosphate and D-glycero-beta-D-manno-heptose 7-phosphate from sedoheptulose 7-phosphate: step 1/1. Functionally, catalyzes the isomerization of sedoheptulose 7-phosphate in D-glycero-D-manno-heptose 7-phosphate. The polypeptide is Phosphoheptose isomerase (Haemophilus influenzae (strain PittGG)).